The sequence spans 252 residues: Triosephosphate isomerase (252 aa).

10–12 (NWK) is a substrate binding site. His96 (electrophile) is an active-site residue. The active-site Proton acceptor is the Glu168. Residues Gly174, Ser214, and 235–236 (GG) contribute to the substrate site.

The protein belongs to the triosephosphate isomerase family. In terms of assembly, homodimer.

The protein resides in the cytoplasm. It catalyses the reaction D-glyceraldehyde 3-phosphate = dihydroxyacetone phosphate. It participates in carbohydrate biosynthesis; gluconeogenesis. It functions in the pathway carbohydrate degradation; glycolysis; D-glyceraldehyde 3-phosphate from glycerone phosphate: step 1/1. In terms of biological role, involved in the gluconeogenesis. Catalyzes stereospecifically the conversion of dihydroxyacetone phosphate (DHAP) to D-glyceraldehyde-3-phosphate (G3P). This is Triosephosphate isomerase from Streptococcus pyogenes serotype M6 (strain ATCC BAA-946 / MGAS10394).